We begin with the raw amino-acid sequence, 206 residues long: Ribosomal RNA large subunit methyltransferase E (206 aa).

Residues G60, W62, D80, D96, and D121 each coordinate S-adenosyl-L-methionine. K161 acts as the Proton acceptor in catalysis.

This sequence belongs to the class I-like SAM-binding methyltransferase superfamily. RNA methyltransferase RlmE family.

The protein resides in the cytoplasm. It catalyses the reaction uridine(2552) in 23S rRNA + S-adenosyl-L-methionine = 2'-O-methyluridine(2552) in 23S rRNA + S-adenosyl-L-homocysteine + H(+). Functionally, specifically methylates the uridine in position 2552 of 23S rRNA at the 2'-O position of the ribose in the fully assembled 50S ribosomal subunit. In Legionella pneumophila (strain Lens), this protein is Ribosomal RNA large subunit methyltransferase E.